The chain runs to 401 residues: MRTLWQHCHVATMAEGRYSAIEDAAIVTSAGLIEWIGPRAELAPVEADRTVDLGGAWVTPGLIDCHTHAVFGGNRSGEFEQRLQGVSYAEIAAQGGGIASTVRATRAASEDELFASARQRVQALMRDGVTTIEIKSGYGLDLANERKMLRVARRLADELPLAVRATCLAAHALPPEYAGRADDYIAHICDEMLPALAAEGLVDAVDAFCEHLAFSPAQVERLFIKARALGLPVKLHAEQLSSLHGSSLAARYQALSADHLEFMTEEDAIAMAKAGTVAVLLPGAFYFLRETQLPPMDALRRHGVKIALASDLNPGTSPGLSLRLMLNMGCTCFRMTPEEALAGVTVHAATALGLGDSHGSLEVGKVADFVAWQIERPADLAYWLGGDLPKRVVRKGHEISN.

Fe(3+) is bound by residues H66 and H68. Positions 66 and 68 each coordinate Zn(2+). The 4-imidazolone-5-propanoate site is built by R75, Y138, and H171. Residue Y138 coordinates N-formimidoyl-L-glutamate. H236 contributes to the Fe(3+) binding site. H236 provides a ligand contact to Zn(2+). 4-imidazolone-5-propanoate is bound at residue Q239. D311 contacts Fe(3+). D311 contacts Zn(2+). 2 residues coordinate N-formimidoyl-L-glutamate: N313 and G315. T316 is a 4-imidazolone-5-propanoate binding site.

The protein belongs to the metallo-dependent hydrolases superfamily. HutI family. It depends on Zn(2+) as a cofactor. The cofactor is Fe(3+).

The protein localises to the cytoplasm. It carries out the reaction 4-imidazolone-5-propanoate + H2O = N-formimidoyl-L-glutamate. Its pathway is amino-acid degradation; L-histidine degradation into L-glutamate; N-formimidoyl-L-glutamate from L-histidine: step 3/3. Functionally, catalyzes the hydrolytic cleavage of the carbon-nitrogen bond in imidazolone-5-propanoate to yield N-formimidoyl-L-glutamate. It is the third step in the universal histidine degradation pathway. The polypeptide is Imidazolonepropionase (Pseudomonas putida (strain GB-1)).